Consider the following 161-residue polypeptide: Large ribosomal subunit protein bL17 (161 aa).

The span at 132–144 shows a compositional bias: basic and acidic residues; it reads ARAKRAEDNRKAL. Residues 132 to 161 are disordered; the sequence is ARAKRAEDNRKALEAQQAQAEAETTGETKA. Residues 145–161 are compositionally biased toward low complexity; that stretch reads EAQQAQAEAETTGETKA.

It belongs to the bacterial ribosomal protein bL17 family. Part of the 50S ribosomal subunit. Contacts protein L32.

This Koribacter versatilis (strain Ellin345) protein is Large ribosomal subunit protein bL17.